The following is a 264-amino-acid chain: MIVVKIGGRVVKNSLDKVILDIANINDKVILVHGGGDIVTDYTKRLGIEPVFVTSPEGIRSRYTTKEELEVYIMAMSLINKTITSKLCSLGKNAIGITGVDGGLLLAERKKRIIVIDERGKKRIIEGGYTGKVKEVRSEVINHLMKLFDIIVVSPLALDVEESTPLNIDGDQAAFAISKAVKVNVLVILSDVEGVLVEGKVVDRLTPEEAKELSKKIGPGMNRKLLMAAESVENGVNKVIIGSGVKDRPVSSALELNGTVIVNG.

Residues 35 to 36 (GG), arginine 62, and asparagine 167 each bind substrate.

It belongs to the acetylglutamate kinase family. LysZ subfamily.

Its subcellular location is the cytoplasm. The catalysed reaction is [amino-group carrier protein]-C-terminal-N-(1,4-dicarboxybutan-1-yl)-L-glutamine + ATP = [amino-group carrier protein]-C-terminal-N-(1-carboxy-5-phosphooxy-5-oxopentan-1-yl)-L-glutamine + ADP. It carries out the reaction [amino-group carrier protein]-C-terminal-gamma-(L-glutamyl)-L-glutamate + ATP = [amino-group carrier protein]-C-terminal-gamma-(5-phospho-L-glutamyl)-L-glutamate + ADP. Its pathway is amino-acid biosynthesis; L-lysine biosynthesis via AAA pathway; L-lysine from L-alpha-aminoadipate (Thermus route): step 2/5. It functions in the pathway amino-acid biosynthesis; L-arginine biosynthesis. In terms of biological role, involved in both the arginine and lysine biosynthetic pathways. Phosphorylates the LysW-bound precursors glutamate (for arginine biosynthesis), respectively alpha-aminoadipate (for lysine biosynthesis). In Saccharolobus islandicus (strain L.S.2.15 / Lassen #1) (Sulfolobus islandicus), this protein is [LysW]-aminoadipate/[LysW]-glutamate kinase.